The primary structure comprises 186 residues: ATP-dependent protease subunit HslV (186 aa).

The active site involves Thr14. The Na(+) site is built by Ala168, Cys171, and Thr174.

The protein belongs to the peptidase T1B family. HslV subfamily. In terms of assembly, a double ring-shaped homohexamer of HslV is capped on each side by a ring-shaped HslU homohexamer. The assembly of the HslU/HslV complex is dependent on binding of ATP.

The protein resides in the cytoplasm. It carries out the reaction ATP-dependent cleavage of peptide bonds with broad specificity.. With respect to regulation, allosterically activated by HslU binding. Protease subunit of a proteasome-like degradation complex believed to be a general protein degrading machinery. The chain is ATP-dependent protease subunit HslV from Bradyrhizobium diazoefficiens (strain JCM 10833 / BCRC 13528 / IAM 13628 / NBRC 14792 / USDA 110).